We begin with the raw amino-acid sequence, 890 residues long: MSASSSRQLFDCGSLDWPNKSLFGDPTTRDVMHEHISSTWNAVIRRHMLAPNADAETILGRDGLPSAQFDAYGAMLPSFIQALNAPTTRLRITHRCPTAESILCADASHAPWLYMANNVCAYEATHLKPVQTFIAFDFAHGYCYLSLFIPLSFRITFENARSFSRFLEQLPDILGAYPTLAAIYKTMLFAIRLFPEVLQAPIPIIAKRPGVLQFHVSDARGLPPSWFPMKCGSVRSFVALITNNLNSDLLDGIVGSNGDGEHYTNWNSGHDHWIVNRFITVRDLHSSLKSALDVDLDTEGGRNAVLDLLLDLGVTNLVRREKRFPAHFQGAESVYLLLSCERVGNELVAVQDALQEPLANHSGLDLRALIINLGGLPSRHSDICYTRNIFENDNHLVWNFEFYRIASITRNAQIDRDMLSSSMANLFSNFVSESSNGQYRVKEPRPIAQYRVEHDEPVASGAPSAWWQVLIGITTAILGAIIFFLWRCFLRAKRVKFQAKDSFPWFTTSGDDDSPPPPGDSPSHPPGRSPDRVLPRTVVRDLSFNDDDDLHSVDLDEAGSRFGEVVSLIARGNLRELAGAIPESLSNLTLLQTSASGSGFYTMVALYLATLGDAITAFHEHNDASPTTTQSLRTVELQLEARGLRFNEAGTPANLIQRGVNSSVGRALVRLTQSALLATGEKFRTRMATTLERIAAERLNTLTAYDQRVIEMTTELLAAIKTALEVERSELTPHLANAEALLQVYNNLFSTDYASASLLALRREMILRSAEGRVGEQPTSASDAANEELVQRSMTKLDKEIELFQAQIDSQRRAVTITEASNLRENILQPINTVANIAMAGAFLRGGARHRMPGMPDVAAPMPNPFRAFSGRGHSLTTTRSGGLFRRPRV.

The Peptidase C6 domain occupies 135 to 255; the sequence is AFDFAHGYCY…NSDLLDGIVG (121 aa). Active-site for helper component proteinase activity residues include Cys-143 and His-215. The interval 507–533 is disordered; the sequence is TTSGDDDSPPPPGDSPSHPPGRSPDRV. The segment covering 515–528 has biased composition (pro residues); the sequence is PPPPGDSPSHPPGR.

Belongs to the bymoviruses polyprotein 2 family. Post-translationally, the viral RNA2 of bymoviruses is expressed as a single polyprotein which undergoes post-translational proteolytic processing resulting in the production of at least two individual proteins. The HC-pro cleaves its C-terminus autocatalytically (Potential).

It catalyses the reaction Hydrolyzes a Gly-|-Gly bond at its own C-terminus, commonly in the sequence -Tyr-Xaa-Val-Gly-|-Gly, in the processing of the potyviral polyprotein.. This is Genome polyprotein 2 (RNA2) from Hordeum vulgare (Barley).